The primary structure comprises 319 residues: MRKIAVLTSGGDAPGMNAAIRAVVRTGLDKGITVLGIERGFDGLLNGEIFEMTRRSVADIIQRGGTILRTARSEEFKTEEGQKKATDILRVFGVEGLVVIGGDGSFQGAKSLSELGVKTIGIPGTIDNDLAYTDYTIGFDTAVNTVLDAINKLRDTSTSHGRASVVEVMGRNCGDIALYAGLAGGAESIIVPELRFDIDKLCKTILEGKKNGKMHNLIIVAEGAGKANDIAKTIEKVTGVGTRATVLGHIQRGGSPTANDRILASRMGNRAVELLLEEKSSRVVGINDNRIVDMDIHEALSIEGKFDEKLYEIAKALSY.

ATP is bound at residue G11. An ADP-binding site is contributed by 21-25; sequence RAVVR. ATP contacts are provided by residues 72–73 and 102–105; these read RS and GDGS. Residue D103 coordinates Mg(2+). 125 to 127 provides a ligand contact to substrate; sequence TID. Residue D127 is the Proton acceptor of the active site. R154 lines the ADP pocket. Substrate is bound by residues R162 and 169–171; that span reads MGR. ADP is bound by residues 185-187 and 213-215; these read GAE and KMH. Residues E222, R243, and 249–252 each bind substrate; that span reads HIQR.

Belongs to the phosphofructokinase type A (PFKA) family. ATP-dependent PFK group I subfamily. Prokaryotic clade 'B1' sub-subfamily. As to quaternary structure, homotetramer. Mg(2+) is required as a cofactor.

It localises to the cytoplasm. It carries out the reaction beta-D-fructose 6-phosphate + ATP = beta-D-fructose 1,6-bisphosphate + ADP + H(+). It participates in carbohydrate degradation; glycolysis; D-glyceraldehyde 3-phosphate and glycerone phosphate from D-glucose: step 3/4. Allosterically activated by ADP and other diphosphonucleosides, and allosterically inhibited by phosphoenolpyruvate. Catalyzes the phosphorylation of D-fructose 6-phosphate to fructose 1,6-bisphosphate by ATP, the first committing step of glycolysis. This Clostridium tetani (strain Massachusetts / E88) protein is ATP-dependent 6-phosphofructokinase.